A 170-amino-acid polypeptide reads, in one-letter code: Large ribosomal subunit protein uL15 (170 aa).

Over residues 1 to 12 (MKLHDLRPAEGA) the composition is skewed to basic and acidic residues. Residues 1-52 (MKLHDLRPAEGAHRKRKRIGRGHGSGKGKTGGKGMMGQKARSGPGPYRTFEG) are disordered. The span at 13–26 (HRKRKRIGRGHGSG) shows a compositional bias: basic residues.

This sequence belongs to the universal ribosomal protein uL15 family. As to quaternary structure, part of the 50S ribosomal subunit.

In terms of biological role, binds to the 23S rRNA. The polypeptide is Large ribosomal subunit protein uL15 (Chloroflexus aurantiacus (strain ATCC 29366 / DSM 635 / J-10-fl)).